The chain runs to 157 residues: Endoribonuclease YbeY (157 aa).

Zn(2+)-binding residues include histidine 114, histidine 118, and histidine 124.

Belongs to the endoribonuclease YbeY family. Zn(2+) is required as a cofactor.

It localises to the cytoplasm. Functionally, single strand-specific metallo-endoribonuclease involved in late-stage 70S ribosome quality control and in maturation of the 3' terminus of the 16S rRNA. In Yersinia enterocolitica serotype O:8 / biotype 1B (strain NCTC 13174 / 8081), this protein is Endoribonuclease YbeY.